The sequence spans 142 residues: Endoribonuclease YbeY (142 aa).

Zn(2+) contacts are provided by His-100, His-104, and His-110.

This sequence belongs to the endoribonuclease YbeY family. Zn(2+) serves as cofactor.

It is found in the cytoplasm. Functionally, single strand-specific metallo-endoribonuclease involved in late-stage 70S ribosome quality control and in maturation of the 3' terminus of the 16S rRNA. This chain is Endoribonuclease YbeY, found in Helicobacter pylori (strain G27).